The chain runs to 197 residues: 7-methyl-GTP pyrophosphatase (197 aa).

D74 serves as the catalytic Proton acceptor.

This sequence belongs to the Maf family. YceF subfamily. The cofactor is a divalent metal cation.

It localises to the cytoplasm. The catalysed reaction is N(7)-methyl-GTP + H2O = N(7)-methyl-GMP + diphosphate + H(+). In terms of biological role, nucleoside triphosphate pyrophosphatase that hydrolyzes 7-methyl-GTP (m(7)GTP). May have a dual role in cell division arrest and in preventing the incorporation of modified nucleotides into cellular nucleic acids. In Saccharophagus degradans (strain 2-40 / ATCC 43961 / DSM 17024), this protein is 7-methyl-GTP pyrophosphatase.